The chain runs to 116 residues: MEEYHRPCDEVGFNADEAHNIVKECIDGVLGGEDYNQNNINQWTASIVEQSLAHLVKLGKAYKYIVTCAVVQRSPYGFHTASSCFWDTTSDGTCTVRWENRTMNCIVNVFAIAIVL.

At Tyr-4 the chain carries 3'-nitrotyrosine.

Belongs to the dynein light chain Tctex-type family. As to quaternary structure, homodimer. The cytoplasmic dynein 1 complex consists of two catalytic heavy chains (HCs) and a number of non-catalytic subunits presented by intermediate chains (ICs), light intermediate chains (LICs) and light chains (LCs); the composition seems to vary in respect to the IC, LIC and LC composition. The heavy chain homodimer serves as a scaffold for the probable homodimeric assembly of the respective non-catalytic subunits. The ICs and LICs bind directly to the HC dimer and the LCs assemble on the IC dimer. DYNLT1 and DYNLT3 compete for association with dynein IC (DYNC1I1 or DYNC1I2). Self-associates. Interacts with DYNC1I1 and DYNC1I2. Interacts with BUB3. Interacts with SATB1 in nucleus to form complex with matrix attachment regions (MARs) of DNA.

Its subcellular location is the nucleus. The protein localises to the cytoplasm. The protein resides in the cytoskeleton. It localises to the chromosome. It is found in the centromere. Its subcellular location is the kinetochore. Acts as one of several non-catalytic accessory components of the cytoplasmic dynein 1 complex that are thought to be involved in linking dynein to cargos and to adapter proteins that regulate dynein function. Cytoplasmic dynein 1 acts as a motor for the intracellular retrograde motility of vesicles and organelles along microtubules. Probably binds BUB3 as part of transport cargo. Required for the efficient progression through mitosis. This is Dynein light chain Tctex-type 3 (DYNLT3) from Ovis aries (Sheep).